The chain runs to 364 residues: Methylthioribose-1-phosphate isomerase (364 aa).

Substrate is bound by residues 53 to 55, Arg-90, and Gln-203; that span reads RGA. Asp-244 (proton donor) is an active-site residue. 254–255 contributes to the substrate binding site; sequence NK.

The protein belongs to the eIF-2B alpha/beta/delta subunits family. MtnA subfamily.

It catalyses the reaction 5-(methylsulfanyl)-alpha-D-ribose 1-phosphate = 5-(methylsulfanyl)-D-ribulose 1-phosphate. Its pathway is amino-acid biosynthesis; L-methionine biosynthesis via salvage pathway; L-methionine from S-methyl-5-thio-alpha-D-ribose 1-phosphate: step 1/6. Catalyzes the interconversion of methylthioribose-1-phosphate (MTR-1-P) into methylthioribulose-1-phosphate (MTRu-1-P). The polypeptide is Methylthioribose-1-phosphate isomerase (Rhizobium meliloti (strain 1021) (Ensifer meliloti)).